A 65-amino-acid polypeptide reads, in one-letter code: Large ribosomal subunit protein bL32 (65 aa).

Positions 1–19 are enriched in basic residues; that stretch reads MAVQKSRKTPSKRGMRRSH. Residues 1-32 are disordered; sequence MAVQKSRKTPSKRGMRRSHNALTNPTLSEDQE.

This sequence belongs to the bacterial ribosomal protein bL32 family.

The sequence is that of Large ribosomal subunit protein bL32 from Ruthia magnifica subsp. Calyptogena magnifica.